Reading from the N-terminus, the 501-residue chain is ATP synthase subunit alpha (501 aa).

Residue 169–176 coordinates ATP; it reads GDRQTGKT.

It belongs to the ATPase alpha/beta chains family. F-type ATPases have 2 components, CF(1) - the catalytic core - and CF(0) - the membrane proton channel. CF(1) has five subunits: alpha(3), beta(3), gamma(1), delta(1), epsilon(1). CF(0) has three main subunits: a(1), b(2) and c(9-12). The alpha and beta chains form an alternating ring which encloses part of the gamma chain. CF(1) is attached to CF(0) by a central stalk formed by the gamma and epsilon chains, while a peripheral stalk is formed by the delta and b chains.

Its subcellular location is the cell membrane. The enzyme catalyses ATP + H2O + 4 H(+)(in) = ADP + phosphate + 5 H(+)(out). In terms of biological role, produces ATP from ADP in the presence of a proton gradient across the membrane. The alpha chain is a regulatory subunit. The polypeptide is ATP synthase subunit alpha (Streptococcus agalactiae serotype Ia (strain ATCC 27591 / A909 / CDC SS700)).